A 109-amino-acid chain; its full sequence is uncharacterized protein (109 aa).

3 consecutive transmembrane segments (helical) span residues 16 to 36 (HPHLGISFIGCLLAITLEIYF), 52 to 72 (LIVLLVINMVTIPVVMALIAL), and 87 to 107 (ILLCLLSCILTIAGLFIAYPV).

It localises to the cell membrane. This is an uncharacterized protein from Salmonella typhimurium (strain LT2 / SGSC1412 / ATCC 700720).